Consider the following 144-residue polypeptide: Small ribosomal subunit protein bS6 (144 aa).

A disordered region spans residues 99 to 144 (KASPLAPCEEKGEEGKAEDAADELTTFGMADDDDLGDDDDTVEAGI). Residues 106-117 (CEEKGEEGKAED) show a composition bias toward basic and acidic residues. The span at 128 to 144 (ADDDDLGDDDDTVEAGI) shows a compositional bias: acidic residues.

It belongs to the bacterial ribosomal protein bS6 family.

Its function is as follows. Binds together with bS18 to 16S ribosomal RNA. This Magnetococcus marinus (strain ATCC BAA-1437 / JCM 17883 / MC-1) protein is Small ribosomal subunit protein bS6.